The primary structure comprises 668 residues: Auxilin-like clathrin uncoating factor SWA2 (668 aa).

A disordered region spans residues 1-95; the sequence is MSDPFAHLLT…ANNTPPSALA (95 aa). The tract at residues 1–100 is CB1; the sequence is MSDPFAHLLT…PSALANTDDD (100 aa). Residues 17–36 are compositionally biased toward polar residues; sequence SASASKETTPQSSNSPSITG. A phosphoserine mark is found at S52 and S64. Residues 76–92 show a composition bias toward low complexity; it reads PTNSTTKSNTANNTPPS. The UBA domain occupies 140-180; the sequence is DEVKDMEIARLMSLGLSIEEATEFYENDVTYERYLEILKSK. The segment at 238-302 is CB2; the sequence is EANDRLNNYS…FETKIDITKR (65 aa). S264, S308, and S312 each carry phosphoserine. Disordered stretches follow at residues 302–323 and 339–359; these read RTAPDVSHSSSPTSGILIEENS and EGNLTNSKSNEDSTLFNENSN. The interval 303–362 is CB3; sequence TAPDVSHSSSPTSGILIEENSRRNEPLIEDSLLDFSEGNLTNSKSNEDSTLFNENSNTDS. Over residues 340 to 359 the composition is skewed to polar residues; it reads GNLTNSKSNEDSTLFNENSN. 3 TPR repeats span residues 374 to 407, 412 to 445, and 467 to 500; these read YNEFKAKGTSLFKNGDYINSLQEYEKSLNTLPLN, IIALSNIIASQLKIGEYSKSIENSSMALELFPSS, and PKIMIRRAESFEHLESFKKALETYQELIKKNFFD. The interval 511–556 is disordered; the sequence is QDFINPPPVKKSMPVKKKTTTTSPATKKQNLTASSSNSPISVDSTS. Residues 539–555 show a composition bias toward polar residues; it reads QNLTASSSNSPISVDST. The J domain maps to 603–668; it reads CNWKDVSMQD…DKFKLQNDIN (66 aa).

Interacts with the clathrin light and heavy chains CLC1 and CHC1, respectively. Binds to clathrin with its N-terminal domain containing 3 clathrin-binding (CB) motifs. Association with clathrin is transient. Binds to polyubiquitin and ubiquitinated proteins.

The protein resides in the cytoplasm. The protein localises to the endoplasmic reticulum membrane. Its function is as follows. Cofactor for the uncoating of clathrin-coated vesicles (CCVs) by Hsp70-type chaperones (SSA1/2/3 and SSB1/2). Coat disassembly is important for fusion of vesicles with target membranes and for recycling components of clathrin coats to the cytoplasm for further rounds of vesicle formation. Binds to assembled clathrin and recruits the ATP-activated chaperone to CCVs. Stimulates the ATPase activity of the clathrin-associated Hsp70-type chaperone SSA1, which then disrupts clathrin-clathrin interactions, leading to release of the clathrin coat. In addition, prevents unproductive clathrin assembly in the cell. Also required for cortical endoplasmic reticulum inheritance. The protein is Auxilin-like clathrin uncoating factor SWA2 (SWA2) of Saccharomyces cerevisiae (strain ATCC 204508 / S288c) (Baker's yeast).